The following is a 424-amino-acid chain: Histidine--tRNA ligase (424 aa).

This sequence belongs to the class-II aminoacyl-tRNA synthetase family. In terms of assembly, homodimer.

Its subcellular location is the cytoplasm. It catalyses the reaction tRNA(His) + L-histidine + ATP = L-histidyl-tRNA(His) + AMP + diphosphate + H(+). In Escherichia coli O127:H6 (strain E2348/69 / EPEC), this protein is Histidine--tRNA ligase.